A 207-amino-acid polypeptide reads, in one-letter code: Protein 6b (207 aa).

The disordered stretch occupies residues 160–183; that stretch reads GNYTEEGEDDDDEMDDEGEAGGAE. Residues 164 to 178 are compositionally biased toward acidic residues; that stretch reads EEGEDDDDEMDDEGE.

Its function is as follows. Involved in tumor formation and increases auxin and cytokinin effects in host plants. This is Protein 6b (6b) from Agrobacterium tumefaciens (strain Ach5).